The chain runs to 409 residues: Elongation factor Tu, chloroplastic (409 aa).

The tr-type G domain maps to 10–214 (KPHVNIGTIG…NVDSYIPTPA (205 aa)). The tract at residues 19-26 (GHVDHGKT) is G1. 19–26 (GHVDHGKT) contacts GTP. Thr-26 lines the Mg(2+) pocket. The tract at residues 60–64 (GITIN) is G2. The G3 stretch occupies residues 81 to 84 (DCPG). Residues 81–85 (DCPGH) and 136–139 (NKED) each bind GTP. The segment at 136-139 (NKED) is G4. The G5 stretch occupies residues 174–176 (SAL).

The protein belongs to the TRAFAC class translation factor GTPase superfamily. Classic translation factor GTPase family. EF-Tu/EF-1A subfamily.

The protein resides in the plastid. It is found in the chloroplast. The catalysed reaction is GTP + H2O = GDP + phosphate + H(+). Functionally, GTP hydrolase that promotes the GTP-dependent binding of aminoacyl-tRNA to the A-site of ribosomes during protein biosynthesis. The polypeptide is Elongation factor Tu, chloroplastic (tufA) (Ostreococcus tauri).